We begin with the raw amino-acid sequence, 315 residues long: HTH-type transcriptional regulator TreR (315 aa).

Residues Leu5–Gly59 form the HTH lacI-type domain. Positions Ile7–Asn26 form a DNA-binding region, H-T-H motif. Residues Arg71–Glu77, Gly126, Arg147, Asp187–Thr190, Arg194, Thr242, and Tyr284 each bind alpha,alpha-trehalose 6-phosphate.

In terms of assembly, homodimer.

In terms of biological role, repressor of the treBC operon. It is able to bind trehalose-6-phosphate and trehalose. This Escherichia coli (strain K12) protein is HTH-type transcriptional regulator TreR (treR).